The chain runs to 284 residues: Bifunctional protein FolD (284 aa).

Residues 166–168 (GSS) and isoleucine 232 contribute to the NADP(+) site.

The protein belongs to the tetrahydrofolate dehydrogenase/cyclohydrolase family. As to quaternary structure, homodimer.

The catalysed reaction is (6R)-5,10-methylene-5,6,7,8-tetrahydrofolate + NADP(+) = (6R)-5,10-methenyltetrahydrofolate + NADPH. It catalyses the reaction (6R)-5,10-methenyltetrahydrofolate + H2O = (6R)-10-formyltetrahydrofolate + H(+). The protein operates within one-carbon metabolism; tetrahydrofolate interconversion. Functionally, catalyzes the oxidation of 5,10-methylenetetrahydrofolate to 5,10-methenyltetrahydrofolate and then the hydrolysis of 5,10-methenyltetrahydrofolate to 10-formyltetrahydrofolate. This is Bifunctional protein FolD from Buchnera aphidicola subsp. Cinara cedri (strain Cc).